Here is a 213-residue protein sequence, read N- to C-terminus: Gas vesicle protein F (213 aa).

The protein belongs to the gas vesicle GvpF/GvpL family. Binds GvpA.

The protein localises to the gas vesicle. A minor component of the gas vesicle, may be involved in preventing GvpA aggregation during gas vesicle nucleation. Gas vesicles are hollow, gas filled proteinaceous nanostructures found in some microorganisms. They allow positioning of halobacteria at the optimal depth for growth in the poorly aerated, shallow brine pools of their habitat. Functionally, expression of a 9.5 kb mc-vac DNA fragment containing 2 divergently transcribed regions (gvpD-gvpE-gvpF-gvpG-gvpH-gvpI-gvpJ-gvpK-gvpL-gvpM and gvpA-gvpC-gvpN-gvpO) allows H.volcanii to produce gas vesicles. The polypeptide is Gas vesicle protein F (Haloferax mediterranei (strain ATCC 33500 / DSM 1411 / JCM 8866 / NBRC 14739 / NCIMB 2177 / R-4) (Halobacterium mediterranei)).